The primary structure comprises 274 residues: Diaminopimelate epimerase (274 aa).

Residues Asn-11, Gln-44, and Asn-64 each contribute to the substrate site. The Proton donor role is filled by Cys-73. Substrate contacts are provided by residues 74–75, Asn-157, Asn-190, and 208–209; these read GN and ER. Cys-217 acts as the Proton acceptor in catalysis. Position 218–219 (218–219) interacts with substrate; that stretch reads GS.

This sequence belongs to the diaminopimelate epimerase family. As to quaternary structure, homodimer.

It localises to the cytoplasm. The catalysed reaction is (2S,6S)-2,6-diaminopimelate = meso-2,6-diaminopimelate. It functions in the pathway amino-acid biosynthesis; L-lysine biosynthesis via DAP pathway; DL-2,6-diaminopimelate from LL-2,6-diaminopimelate: step 1/1. Functionally, catalyzes the stereoinversion of LL-2,6-diaminopimelate (L,L-DAP) to meso-diaminopimelate (meso-DAP), a precursor of L-lysine and an essential component of the bacterial peptidoglycan. In Salmonella agona (strain SL483), this protein is Diaminopimelate epimerase.